A 359-amino-acid polypeptide reads, in one-letter code: C-X-C chemokine receptor type 4 (359 aa).

Residues M1–Y23 are important for chemokine binding and signaling. Topologically, residues M1–R40 are extracellular. Y9 carries the post-translational modification Sulfotyrosine. Residue N13 is glycosylated (N-linked (GlcNAc...) asparagine). Y14 is subject to Sulfotyrosine. An O-linked (Xyl...) (chondroitin sulfate) serine glycan is attached at S20. The residue at position 23 (Y23) is a Sulfotyrosine. Cystine bridges form between C30-C281 and C111-C193. Residues I41–M65 traverse the membrane as a helical segment. Over G66–R79 the chain is Cytoplasmic. Residues L80–M101 form a helical membrane-spanning segment. Residues W96–D99 are chemokine binding. Residues A102–K112 are Extracellular-facing. Residues A113–I132 traverse the membrane as a helical segment. A chemokine binding region spans residues H115–T119. Topologically, residues S133 to K156 are cytoplasmic. Positions D135–Y137 match the Important for signaling motif. The interval Y137–P149 is involved in dimerization; when bound to chemokine. The chain crosses the membrane as a helical span at residues A157–F176. Topologically, residues A177–W202 are extracellular. Residues C193–Y197 form a chemokine binding, important for signaling region. Residues P198–L217 form an involved in dimerization region. Residues M203 to L223 traverse the membrane as a helical segment. The Cytoplasmic portion of the chain corresponds to S224–T248. The chain crosses the membrane as a helical span at residues V249–I268. Topologically, residues D269 to K289 are extracellular. The tract at residues L273–G275 is involved in dimerization. Residues W290–Y309 traverse the membrane as a helical segment. Residues A310–S359 are Cytoplasmic-facing. Phosphoserine occurs at positions 326 and 328. Phosphoserine; by PKC and GRK6 is present on residues S331 and S332. Residues I335–S359 form a disordered region. At S337 the chain carries Phosphoserine; by GRK6. Residue K338 forms a Glycyl lysine isopeptide (Lys-Gly) (interchain with G-Cter in ubiquitin) linkage. A compositionally biased stretch (low complexity) spans H344 to S359. Residue S346 is modified to Phosphoserine; by GRK6. Phosphoserine is present on residues S355 and S358.

It belongs to the G-protein coupled receptor 1 family. As to quaternary structure, monomer. Can form homodimers. Interacts with CD164. Interacts with ARRB2; the interaction is dependent on the C-terminal phosphorylation of CXCR4 and allows activation of MAPK1 and MAPK3. Interacts with ARR3; the interaction is dependent on the C-terminal phosphorylation of CXCR4 and modulates calcium mobilization. Interacts with RNF113A; the interaction, enhanced by CXCL12, promotes CXCR4 ubiquitination and subsequent degradation. Interacts (via the cytoplasmic C-terminal) with ITCH (via the WW domains I and II); the interaction, enhanced by CXCL12, promotes CXCR4 ubiquitination and leads to its degradation. Interacts with extracellular ubiquitin. Interacts with DBN1; this interaction is enhanced by antigenic stimulation. Following LPS binding, may form a complex with GDF5, HSP90AA1 and HSPA8. Post-translationally, phosphorylated on agonist stimulation. Rapidly phosphorylated on serine and threonine residues in the C-terminal. Phosphorylation at Ser-331 and Ser-332 leads to recruitment of ITCH, ubiquitination and protein degradation. In terms of processing, ubiquitinated after ligand binding, leading to its degradation. Ubiquitinated by ITCH at the cell membrane on agonist stimulation. The ubiquitin-dependent mechanism, endosomal sorting complex required for transport (ESCRT), then targets CXCR4 for lysosomal degradation. This process is dependent also on prior Ser-/Thr-phosphorylation in the C-terminal of CXCR4. Also binding of ARRB1 to STAM negatively regulates CXCR4 sorting to lysosomes though modulating ubiquitination of SFR5S. Sulfation is required for efficient binding of CXCL12/SDF-1alpha and promotes its dimerization. Post-translationally, O- and N-glycosylated. N-glycosylation can mask coreceptor function. The O-glycosylation chondroitin sulfate attachment does not affect interaction with CXCL12/SDF-1alpha nor its coreceptor activity. In terms of tissue distribution, lymphocytes, macrophages, neutrophils, microglial cells and astrocytes. Found in spleen, thymus, bone marrow, lymph nodes and, at lower levels in brain, small intestine, stomach and kidney. CXCR4-A is predominant in all tissues tested. During embryonic development, high levels are detected in the endothelium of developing blood vessels and in many regions of the developing brain including the olfactory epithelium, olfactory bulb, hippocampus, cerebellum and spinal cord.

It is found in the cell membrane. Its subcellular location is the cell junction. The protein resides in the early endosome. It localises to the late endosome. The protein localises to the lysosome. Functionally, receptor for the C-X-C chemokine CXCL12/SDF-1 that transduces a signal by increasing intracellular calcium ion levels and enhancing MAPK1/MAPK3 activation. Involved in the AKT signaling cascade. Plays a role in regulation of cell migration, e.g. during wound healing. Acts as a receptor for extracellular ubiquitin; leading to enhanced intracellular calcium ions and reduced cellular cAMP levels. Binds bacterial lipopolysaccharide (LPS) et mediates LPS-induced inflammatory response, including TNF secretion by monocytes. Involved in hematopoiesis and in cardiac ventricular septum formation. Also plays an essential role in vascularization of the gastrointestinal tract, probably by regulating vascular branching and/or remodeling processes in endothelial cells. Involved in cerebellar development. In the CNS, could mediate hippocampal-neuron survival. The chain is C-X-C chemokine receptor type 4 (Cxcr4) from Mus musculus (Mouse).